Consider the following 1115-residue polypeptide: MTGSHEMESIMLDSMEEEFPVSVETLGKLVDVPKGFDTYAELGGLSGLSTKLKSNIKTGLPLEKSSTEENRVLKYSKNILPDPPHQPLWSIVLDALSDHILILLIVAAVVSIVLGSIDYTSDHPETGWIDGVAILVAVILVVGITSLNDFKNQARFRELNDKSNDKEVKGIRGGEQCQISIFDVKVGDIISLDTGDIICADGVFIEGHALKCDESSITGESDPIKKGQPQDNMDPFLISGSMVIEGFGTMLVTAVGVNSFNGKTMMGLRVASEDTPLQMKLSVLASRIGYFGMGAAILMLLIAIPKYFIQRKVHDIEITREDAQPIVQLVISAITIVVVAVPEGLPLAVTMALAYGMMKMFKENNLVRNLASCETMGSATTICSDKTGTLTQNVMSVVTGTICGVFPTLDGIAQKIPKHVQSILTDGMAINSNAYEGVSSKGKLEFIGSKTECALLNFGKLFGCDYNEVRKRLEVVELYPFSSARKRMSVLVKHDQNLRLFTKGASEIILGQCGSYLDEAGNIRPISEAKAYFEEQINNFASDALRTIGLAYRDFQYGECDFKEPPENNLVFIGIVGIKDPLRPEVPEAVEICKRAGIVVRMVTGDNLVTAQNIARNCGILTEGGLCMEGPKFRELSQSEMDAILPKLQVLARSSPTDKQLLVGRLKDLGEVVAVTGDGTNDGPALKLANVGFSMGISGTEVAIAASDVVLLDDNFASIVRAVLWGRNIYDAICKFLQFQLTVNVVAVTVAFIGTLTSDVVEDKDNSSSSGSADKVTEEEPRQGSPLTAVQLLWVNLIMDTLAALALATEPPTPELLERPPNGKNAPLITRSMWKNIIGQAALQLAILFTILYQGHNIFQHFVPQAHGPIIKNGLHHYTLVFNCFVFLQLFNEINARVLGSRTNPFKNFFNNPIFIAVMIFTLGVQIIFVTFGGSATSTDSLYIVEWICCVVVGAISLPVGLLLRKIPIREPVVKNEIPVHSEAVYTSPSPNPSSSNLLGSGGAKPISKDYPTSGESTPPINDEGSPLVTRKTSVGASANDNINTPIPSSSSNLVNLNKPTQVGRGWQIVRQTHKKLVVINALKEFSQNKEPGLVDVVRGTNRGSLHLPVNQINN.

Residues 1-99 (MTGSHEMESI…SIVLDALSDH (99 aa)) lie on the Stromal side of the membrane. Residues 100 to 120 (ILILLIVAAVVSIVLGSIDYT) traverse the membrane as a helical segment. The Lumenal portion of the chain corresponds to 121-126 (SDHPET). The chain crosses the membrane as a helical span at residues 127–147 (GWIDGVAILVAVILVVGITSL). At 148 to 235 (NDFKNQARFR…KGQPQDNMDP (88 aa)) the chain is on the stromal side. A helical membrane pass occupies residues 236-256 (FLISGSMVIEGFGTMLVTAVG). Residues 257–287 (VNSFNGKTMMGLRVASEDTPLQMKLSVLASR) are Lumenal-facing. Residues 288-308 (IGYFGMGAAILMLLIAIPKYF) form a helical membrane-spanning segment. Residues 309 to 328 (IQRKVHDIEITREDAQPIVQ) lie on the Stromal side of the membrane. A helical transmembrane segment spans residues 329-349 (LVISAITIVVVAVPEGLPLAV). The Lumenal portion of the chain corresponds to 350–735 (TMALAYGMMK…GRNIYDAICK (386 aa)). Asp385 acts as the 4-aspartylphosphate intermediate in catalysis. Positions 678 and 682 each coordinate Mg(2+). Residues 736-756 (FLQFQLTVNVVAVTVAFIGTL) traverse the membrane as a helical segment. Topologically, residues 757–832 (TSDVVEDKDN…GKNAPLITRS (76 aa)) are stromal. Positions 762–784 (EDKDNSSSSGSADKVTEEEPRQG) are disordered. Residues 833–853 (MWKNIIGQAALQLAILFTILY) traverse the membrane as a helical segment. The Lumenal portion of the chain corresponds to 854-873 (QGHNIFQHFVPQAHGPIIKN). Residues 874–894 (GLHHYTLVFNCFVFLQLFNEI) traverse the membrane as a helical segment. The Stromal segment spans residues 895–913 (NARVLGSRTNPFKNFFNNP). The chain crosses the membrane as a helical span at residues 914 to 934 (IFIAVMIFTLGVQIIFVTFGG). Residues 935–943 (SATSTDSLY) are Lumenal-facing. A helical transmembrane segment spans residues 944 to 964 (IVEWICCVVVGAISLPVGLLL). At 965–1115 (RKIPIREPVV…LHLPVNQINN (151 aa)) the chain is on the stromal side. A disordered region spans residues 984 to 1056 (AVYTSPSPNP…IPSSSSNLVN (73 aa)). The span at 1040–1053 (NDNINTPIPSSSSN) shows a compositional bias: low complexity.

This sequence belongs to the cation transport ATPase (P-type) (TC 3.A.3) family. Type IIB subfamily.

Its subcellular location is the contractile vacuole membrane. The protein resides in the cell membrane. It carries out the reaction Ca(2+)(in) + ATP + H2O = Ca(2+)(out) + ADP + phosphate + H(+). Calcium ATPase involved in Ca(2+) homeostasis as a component of the contractile vacuole complex. The sequence is that of Calcium-transporting ATPase PAT1 (patA) from Dictyostelium discoideum (Social amoeba).